The chain runs to 255 residues: Syntaxin-6 (255 aa).

Ser2 carries the N-acetylserine modification. Ser2 is subject to Phosphoserine. Positions 2-168 (SMEDPFFVVK…QAQQQLIVEQ (167 aa)) are required for interaction with VPS51. Over 2-234 (SMEDPFFVVK…VSHMTSDRRQ (233 aa)) the chain is Cytoplasmic. Residues 41–74 (EEIDWTTNELRNNLRSIEWDLEDLDETISIVEAN) are a coiled coil. 2 positions are modified to phosphoserine: Ser129 and Ser152. Positions 163-225 (QLIVEQQDEQ…DNVMKKLAKV (63 aa)) constitute a t-SNARE coiled-coil homology domain. The helical; Anchor for type IV membrane protein transmembrane segment at 235-255 (WCAIAILFAVLVVVLILFLVL) threads the bilayer.

The protein belongs to the syntaxin family. As to quaternary structure, identified in a complex containing STX6, STX12 and VAMP4. This complex also includes VTI1A. Binds EEA1. Interacts with VPS45A and GOPC. Interacts with MARCHF2; the interaction promotes MARCHF2-mediated ubiquitination and degradation of CFTR. Interacts with MARCHF3. Interacts with BLTP3B (via C-terminal coiled-coil domain). Interacts with BAIAP3; this interaction is increased in the presence of calcium. Interacts with VPS13B.

It localises to the golgi apparatus membrane. Its subcellular location is the golgi apparatus. The protein resides in the trans-Golgi network membrane. It is found in the recycling endosome membrane. SNARE promoting movement of transport vesicles to target membranes. Targets endosomes to the trans-Golgi network, and may therefore function in retrograde trafficking. Together with SNARE STX12, promotes movement of vesicles from endosomes to the cell membrane, and may therefore function in the endocytic recycling pathway. This is Syntaxin-6 (Stx6) from Mus musculus (Mouse).